The following is an 804-amino-acid chain: Chondroitin sulfate synthase mig-22 (804 aa).

Residues 1-6 (MVGGGR) lie on the Cytoplasmic side of the membrane. A helical; Signal-anchor for type II membrane protein membrane pass occupies residues 7–27 (TGIHLLLGFLIGAALALFFFS). Residues 28 to 804 (STPSIDLTSS…QLAKLLFHEK (777 aa)) are Lumenal-facing. N-linked (GlcNAc...) asparagine glycans are attached at residues asparagine 123, asparagine 172, and asparagine 268.

This sequence belongs to the chondroitin N-acetylgalactosaminyltransferase family. Interacts with sqv-5. A divalent metal cation is required as a cofactor. Expressed in seam cells, the vulval epithelium and in oocytes (at protein level).

The protein resides in the golgi apparatus. The protein localises to the golgi stack membrane. It catalyses the reaction 3-O-(beta-D-GlcA-(1-&gt;3)-beta-D-GalNAc-(1-&gt;4)-beta-D-GlcA-(1-&gt;3)-beta-D-Gal-(1-&gt;3)-beta-D-Gal-(1-&gt;4)-beta-D-Xyl)-L-seryl-[protein] + UDP-N-acetyl-alpha-D-galactosamine = 3-O-(beta-D-GalNAc-(1-&gt;4)-beta-D-GlcA-(1-&gt;3)-beta-D-GalNAc-(1-&gt;4)-beta-D-GlcA-(1-&gt;3)-beta-D-Gal-(1-&gt;3)-beta-D-Gal-(1-&gt;4)-beta-D-Xyl)-L-seryl-[protein] + UDP + H(+). The catalysed reaction is 3-O-{beta-D-GlcA-(1-&gt;3)-[beta-D-GalNAc-(1-&gt;4)-beta-D-GlcA-(1-&gt;3)](n)-beta-D-GalNAc-(1-&gt;4)-beta-D-GlcA-(1-&gt;3)-beta-D-Gal-(1-&gt;3)-beta-D-Gal-(1-&gt;4)-beta-D-Xyl}-L-seryl-[protein] + UDP-N-acetyl-alpha-D-galactosamine = 3-O-{[beta-D-GalNAc-(1-&gt;4)-beta-D-GlcA-(1-&gt;3)](n+1)-beta-D-GalNAc-(1-&gt;4)-beta-D-GlcA-(1-&gt;3)-beta-D-Gal-(1-&gt;3)-beta-D-Gal-(1-&gt;4)-beta-D-Xyl}-L-seryl-[protein] + UDP + H(+). The enzyme catalyses 3-O-(beta-D-GalNAc-(1-&gt;4)-beta-D-GlcA-(1-&gt;3)-beta-D-Gal-(1-&gt;3)-beta-D-Gal-(1-&gt;4)-beta-D-Xyl)-L-seryl-[protein] + UDP-alpha-D-glucuronate = 3-O-(beta-D-GlcA-(1-&gt;3)-beta-D-GalNAc-(1-&gt;4)-beta-D-GlcA-(1-&gt;3)-beta-D-Gal-(1-&gt;3)-beta-D-Gal-(1-&gt;4)-beta-D-Xyl)-L-seryl-[protein] + UDP + H(+). It carries out the reaction 3-O-{[beta-D-GalNAc-(1-&gt;4)-beta-D-GlcA-(1-&gt;3)](n)-beta-D-GalNAc-(1-&gt;4)-beta-D-GlcA-(1-&gt;3)-beta-D-Gal-(1-&gt;3)-beta-D-Gal-(1-&gt;4)-beta-D-Xyl}-L-seryl-[protein] + UDP-alpha-D-glucuronate = 3-O-{beta-D-GlcA-(1-&gt;3)-[beta-D-GalNAc-(1-&gt;4)-beta-D-GlcA-(1-&gt;3)](n)-beta-D-GalNAc-(1-&gt;4)-beta-D-GlcA-(1-&gt;3)-beta-D-Gal-(1-&gt;3)-beta-D-Gal-(1-&gt;4)-beta-D-Xyl}-L-seryl-[protein] + UDP + H(+). In terms of biological role, has both beta-1,3-glucuronic acid and beta-1,4-N-acetylgalactosamine transferase activity. Transfers glucuronic acid (GlcUA) from UDP-GlcUA and N-acetylgalactosamine (GalNAc) from UDP-GalNAc to the non-reducing end of the elongating chondroitin polymer. Required together with sqv-5 for the biosynthesis of chondroitin. Chondroitin is involved in organogenesis of the vulva, maturation of the gonad, and neural development. May have a specific role in unc-6/netrin-mediated dorsal guidance of gonadal distal tip cells. Glycosyltransferase activity is weak. The protein is Chondroitin sulfate synthase mig-22 (mig-22) of Caenorhabditis elegans.